Consider the following 153-residue polypeptide: Xanthine-guanine phosphoribosyltransferase (153 aa).

5-phospho-alpha-D-ribose 1-diphosphate contacts are provided by residues 37–38, Arg-69, and 88–96; these read RG and DDLVDTGGT. Arg-69 contacts GMP. A Mg(2+)-binding site is contributed by Asp-89. Asp-92 and Ile-135 together coordinate guanine. Xanthine contacts are provided by Asp-92 and Ile-135. GMP-binding positions include 92-96 and 134-135; these read DTGGT and WI.

The protein belongs to the purine/pyrimidine phosphoribosyltransferase family. XGPT subfamily. In terms of assembly, homotetramer. Mg(2+) is required as a cofactor.

Its subcellular location is the cell inner membrane. The enzyme catalyses GMP + diphosphate = guanine + 5-phospho-alpha-D-ribose 1-diphosphate. It carries out the reaction XMP + diphosphate = xanthine + 5-phospho-alpha-D-ribose 1-diphosphate. It catalyses the reaction IMP + diphosphate = hypoxanthine + 5-phospho-alpha-D-ribose 1-diphosphate. It functions in the pathway purine metabolism; GMP biosynthesis via salvage pathway; GMP from guanine: step 1/1. It participates in purine metabolism; XMP biosynthesis via salvage pathway; XMP from xanthine: step 1/1. Purine salvage pathway enzyme that catalyzes the transfer of the ribosyl-5-phosphate group from 5-phospho-alpha-D-ribose 1-diphosphate (PRPP) to the N9 position of the 6-oxopurines guanine and xanthine to form the corresponding ribonucleotides GMP (guanosine 5'-monophosphate) and XMP (xanthosine 5'-monophosphate), with the release of PPi. To a lesser extent, also acts on hypoxanthine. This Proteus mirabilis (strain HI4320) protein is Xanthine-guanine phosphoribosyltransferase.